The chain runs to 264 residues: Thymidylate synthase (264 aa).

Position 21 (Arg21) interacts with dUMP. (6R)-5,10-methylene-5,6,7,8-tetrahydrofolate is bound at residue His51. 126 to 127 provides a ligand contact to dUMP; sequence RR. Catalysis depends on Cys146, which acts as the Nucleophile. Residues 166–169, Asn177, and 207–209 each bind dUMP; these read RSCD and HLY. Asp169 serves as a coordination point for (6R)-5,10-methylene-5,6,7,8-tetrahydrofolate. Ala263 is a (6R)-5,10-methylene-5,6,7,8-tetrahydrofolate binding site.

The protein belongs to the thymidylate synthase family. Bacterial-type ThyA subfamily. In terms of assembly, homodimer.

It localises to the cytoplasm. It catalyses the reaction dUMP + (6R)-5,10-methylene-5,6,7,8-tetrahydrofolate = 7,8-dihydrofolate + dTMP. It functions in the pathway pyrimidine metabolism; dTTP biosynthesis. Functionally, catalyzes the reductive methylation of 2'-deoxyuridine-5'-monophosphate (dUMP) to 2'-deoxythymidine-5'-monophosphate (dTMP) while utilizing 5,10-methylenetetrahydrofolate (mTHF) as the methyl donor and reductant in the reaction, yielding dihydrofolate (DHF) as a by-product. This enzymatic reaction provides an intracellular de novo source of dTMP, an essential precursor for DNA biosynthesis. This Shewanella oneidensis (strain ATCC 700550 / JCM 31522 / CIP 106686 / LMG 19005 / NCIMB 14063 / MR-1) protein is Thymidylate synthase.